The primary structure comprises 217 residues: UPF0711 protein C18orf21 homolog (217 aa).

Residue Ser-126 is modified to Phosphoserine. 2 positions are modified to phosphothreonine: Thr-130 and Thr-139. Residues 131–190 form a disordered region; sequence AANKASPKTPKRTAPGSANLGQSTNGSKGKSPSLTIRTPTSGQSTPICSSRNGSKRKKHF. The span at 149-182 shows a compositional bias: polar residues; sequence NLGQSTNGSKGKSPSLTIRTPTSGQSTPICSSRN.

The protein belongs to the UPF0711 family.

This chain is UPF0711 protein C18orf21 homolog, found in Mus musculus (Mouse).